The chain runs to 176 residues: Ribosome maturation factor RimM (176 aa).

Residues 97-176 form the PRC barrel domain; the sequence is EDEFYWRDLI…QILVDWDPDF (80 aa).

The protein belongs to the RimM family. Binds ribosomal protein uS19.

The protein localises to the cytoplasm. Its function is as follows. An accessory protein needed during the final step in the assembly of 30S ribosomal subunit, possibly for assembly of the head region. Essential for efficient processing of 16S rRNA. May be needed both before and after RbfA during the maturation of 16S rRNA. It has affinity for free ribosomal 30S subunits but not for 70S ribosomes. The protein is Ribosome maturation factor RimM of Shewanella loihica (strain ATCC BAA-1088 / PV-4).